The primary structure comprises 473 residues: tRNA-2-methylthio-N(6)-dimethylallyladenosine synthase (473 aa).

The tract at residues 1–21 is disordered; the sequence is MTQDSALLQAPEAIPSESLRD. In terms of domain architecture, MTTase N-terminal spans 26–146; the sequence is RKVFIKTYGC…LPEALRRAKQ (121 aa). Residues Cys35, Cys71, Cys109, Cys187, Cys191, and Cys194 each contribute to the [4Fe-4S] cluster site. The Radical SAM core domain maps to 173–405; that stretch reads RARGVTAFLT…QMLLLKQQQE (233 aa). Residues 408 to 470 enclose the TRAM domain; sequence ESCVGKEIDL…TNSLFAEHAE (63 aa).

It belongs to the methylthiotransferase family. MiaB subfamily. As to quaternary structure, monomer. [4Fe-4S] cluster is required as a cofactor.

The protein localises to the cytoplasm. The catalysed reaction is N(6)-dimethylallyladenosine(37) in tRNA + (sulfur carrier)-SH + AH2 + 2 S-adenosyl-L-methionine = 2-methylsulfanyl-N(6)-dimethylallyladenosine(37) in tRNA + (sulfur carrier)-H + 5'-deoxyadenosine + L-methionine + A + S-adenosyl-L-homocysteine + 2 H(+). Its function is as follows. Catalyzes the methylthiolation of N6-(dimethylallyl)adenosine (i(6)A), leading to the formation of 2-methylthio-N6-(dimethylallyl)adenosine (ms(2)i(6)A) at position 37 in tRNAs that read codons beginning with uridine. The chain is tRNA-2-methylthio-N(6)-dimethylallyladenosine synthase from Rhizobium johnstonii (strain DSM 114642 / LMG 32736 / 3841) (Rhizobium leguminosarum bv. viciae).